The following is a 105-amino-acid chain: Circadian clock oscillator protein KaiB (105 aa).

This sequence belongs to the KaiB family. May undergo a major conformational rearrangment; in the free state forms homooligomers. When bound to KaiC switches to a monomeric thioredoxin-fold (KaiB(fs)). The active oscillator complex is probably KaiC(6):KaiB(6).

Component of the KaiBC clock protein complex, which constitutes the main circadian regulator in cyanobacteria; it may modify the ATPase activity of KaiC. Functionally, may be a metamorphic protein which reversibly switches between an inactive tetrameric fold and a rare, thioredoxin-like monomeric fold (KaiB(fs)). KaiB(fs) binds phospho-KaiC, and perhaps clock output effectors. The sequence is that of Circadian clock oscillator protein KaiB from Prochlorococcus marinus (strain MIT 9312).